We begin with the raw amino-acid sequence, 410 residues long: uncharacterized protein (410 aa).

The next 11 membrane-spanning stretches (helical) occupy residues 14–34 (IIIGTIFGRMATSMSIPFLAI), 48–68 (GLVIAASSSVGILASFYGGYI), 82–102 (IFGWMLVFAGFAAASNLWVFF), 140–160 (YAAINIGVVFGPVLGLYFGSS), 164–184 (TPFLVPAVIYGLYGIVLALQF), 212–232 (YLFTIALVGITLCTFGYSQFS), 251–271 (LYGLMLTLNAIVVLATQFPIV), 279–299 (PLCSLMLGNVMVSISMAIFTV), 303–323 (VPSIVMIVITFTIGEVLLFSM), 342–362 (GAIGFSQLGNVIGPWVGGICI), and 371–391 (IYIFSVLSGITLLGLPFLAFA).

This sequence belongs to the major facilitator superfamily. TCR/Tet family.

It localises to the cell membrane. This is an uncharacterized protein from Bacillus subtilis (strain 168).